The chain runs to 311 residues: ATP synthase gamma chain (311 aa).

The protein belongs to the ATPase gamma chain family. In terms of assembly, F-type ATPases have 2 components, CF(1) - the catalytic core - and CF(0) - the membrane proton channel. CF(1) has five subunits: alpha(3), beta(3), gamma(1), delta(1), epsilon(1). CF(0) has three main subunits: a, b and c.

Its subcellular location is the cell membrane. Its function is as follows. Produces ATP from ADP in the presence of a proton gradient across the membrane. The gamma chain is believed to be important in regulating ATPase activity and the flow of protons through the CF(0) complex. The protein is ATP synthase gamma chain of Limosilactobacillus fermentum (strain NBRC 3956 / LMG 18251) (Lactobacillus fermentum).